The primary structure comprises 404 residues: S-adenosylmethionine synthase (404 aa).

139 to 144 provides a ligand contact to ATP; the sequence is GKGSSD.

The protein belongs to the AdoMet synthase 2 family. It depends on Mg(2+) as a cofactor.

It carries out the reaction L-methionine + ATP + H2O = S-adenosyl-L-methionine + phosphate + diphosphate. It functions in the pathway amino-acid biosynthesis; S-adenosyl-L-methionine biosynthesis; S-adenosyl-L-methionine from L-methionine: step 1/1. Its function is as follows. Catalyzes the formation of S-adenosylmethionine from methionine and ATP. This chain is S-adenosylmethionine synthase, found in Saccharolobus solfataricus (strain ATCC 35092 / DSM 1617 / JCM 11322 / P2) (Sulfolobus solfataricus).